The following is a 1015-amino-acid chain: Formate dehydrogenase, nitrate-inducible, major subunit (1015 aa).

The segment at residues methionine 1–alanine 33 is a signal peptide (tat-type signal). Positions alanine 43 to asparagine 106 constitute a 4Fe-4S Mo/W bis-MGD-type domain. Positions 50, 53, 57, and 92 each coordinate [4Fe-4S] cluster. A Mo-bis(molybdopterin guanine dinucleotide)-binding site is contributed by selenocysteine 196. Position 196 (selenocysteine 196) is a non-standard amino acid, selenocysteine.

It belongs to the prokaryotic molybdopterin-containing oxidoreductase family. As to quaternary structure, trimer of heterotrimers, consisting of subunits alpha, beta and gamma. Mo-bis(molybdopterin guanine dinucleotide) serves as cofactor. [4Fe-4S] cluster is required as a cofactor. Exported by the Tat system. The position of the signal peptide cleavage has not been experimentally proven.

It localises to the periplasm. It catalyses the reaction a quinone + formate + H(+) = a quinol + CO2. Formate dehydrogenase allows E.coli to use formate as major electron donor during anaerobic respiration, when nitrate is used as electron acceptor. The alpha subunit FdnG contains the formate oxidation site. Electrons are transferred from formate to menaquinone in the gamma subunit (FdnI), through the 4Fe-4S clusters in the beta subunit (FdnH). Formate dehydrogenase-N is part of a system that generates proton motive force, together with the dissimilatory nitrate reductase (Nar). The protein is Formate dehydrogenase, nitrate-inducible, major subunit (fdnG) of Escherichia coli (strain K12).